The following is a 308-amino-acid chain: uncharacterized protein (308 aa).

The N-terminal stretch at M1–S19 is a signal peptide. N-linked (GlcNAc...) asparagine glycans are attached at residues N25 and N300.

The protein localises to the secreted. This is an uncharacterized protein from Dictyostelium discoideum (Social amoeba).